Reading from the N-terminus, the 722-residue chain is Bifunctional UDP-N-acetylglucosamine 2-epimerase/N-acetylmannosamine kinase (722 aa).

Positions 19, 23, 113, 220, and 253 each coordinate UDP. CMP-N-acetyl-beta-neuraminate contacts are provided by Lys259, Glu271, Lys280, and His281. UDP-binding residues include Val282, Ser301, Ser302, Glu307, and Arg321. The interval 406–722 (TLSALAVDLG…VLDYTTRRIY (317 aa)) is N-acetylmannosamine kinase. Residue Asp413 participates in Mg(2+) binding. An N-acyl-D-mannosamine 6-phosphate is bound at residue Gly416. Residues Thr417, Asn418, and Arg420 each coordinate ADP. Residues Gly476, Arg477, Thr489, Asn516, Asp517, and Gly545 each coordinate an N-acyl-D-mannosamine 6-phosphate. The an N-acyl-D-mannosamine site is built by Gly476, Arg477, Thr489, Asn516, and Asp517. Asp517 is a catalytic residue. An N-acyl-D-mannosamine-binding residues include Glu566 and His569. His569 is an an N-acyl-D-mannosamine 6-phosphate binding site. Zn(2+) contacts are provided by His569, Cys579, Cys581, and Cys586. Glu588 serves as a coordination point for an N-acyl-D-mannosamine 6-phosphate. Glu588 contacts an N-acyl-D-mannosamine.

This sequence in the N-terminal section; belongs to the UDP-N-acetylglucosamine 2-epimerase family. It in the C-terminal section; belongs to the ROK (NagC/XylR) family. Homodimer. Homotetramer. Homohexamer. The hexameric form exhibits both enzyme activities, whereas the dimeric form only catalyzes the phosphorylation of N-acyl-D-mannosamine. In terms of processing, phosphorylated. Phosphorylation by PKC activates the UDP-N-acetylglucosamine 2-epimerase activity. In terms of tissue distribution, highest expression in liver and placenta. Also found in heart, brain, lung, kidney, skeletal muscle and pancreas. Isoform 1 is expressed in heart, brain, kidney, liver, placenta, lung, spleen, pancreas, skeletal muscle and colon. Isoform 2 is expressed mainly in placenta, but also in brain, kidney, liver, lung, pancreas and colon. Isoform 3 is expressed at low level in kidney, liver, placenta and colon.

It is found in the cytoplasm. It localises to the cytosol. The catalysed reaction is UDP-N-acetyl-alpha-D-glucosamine + H2O = aldehydo-N-acetyl-D-mannosamine + UDP + H(+). It catalyses the reaction an N-acyl-D-mannosamine + ATP = an N-acyl-D-mannosamine 6-phosphate + ADP + H(+). It functions in the pathway amino-sugar metabolism; N-acetylneuraminate biosynthesis. With respect to regulation, the UDP-N-acetylglucosamine 2-epimerase activity, in contrast to the N-acetylmannosamine kinase activity, exhibits allosteric regulation by cytidine monophosphate-N-acetylneuraminic acid (CMP-Neu5Ac), the end product of neuraminic acid biosynthesis. Moreover, the activity is contingent upon the oligomeric state of the enzyme. The monomeric form is inactive, while the dimeric form selectively catalyzes the phosphorylation of N-acetylmannosamine. The hexameric form, on the other hand, demonstrates full proficiency in both enzyme activities. Furthermore, the UDP-N-acetylglucosamine 2-epimerase activity is increased by PKC-mediated phosphorylation. Its function is as follows. Bifunctional enzyme that possesses both UDP-N-acetylglucosamine 2-epimerase and N-acetylmannosamine kinase activities, and serves as the initiator of the biosynthetic pathway leading to the production of N-acetylneuraminic acid (NeuAc), a critical precursor in the synthesis of sialic acids. By catalyzing this pivotal and rate-limiting step in sialic acid biosynthesis, this enzyme assumes a pivotal role in governing the regulation of cell surface sialylation, playing a role in embryonic angiogenesis. Sialic acids represent a category of negatively charged sugars that reside on the surface of cells as terminal components of glycoconjugates and mediate important functions in various cellular processes, including cell adhesion, signal transduction, and cellular recognition. In Homo sapiens (Human), this protein is Bifunctional UDP-N-acetylglucosamine 2-epimerase/N-acetylmannosamine kinase.